Reading from the N-terminus, the 1058-residue chain is Protein HIR1 (1058 aa).

7 WD repeats span residues 15 to 54 (RKDF…NTND), 69 to 108 (NHSG…PSHA), 130 to 169 (GHDN…KLKT), 172 to 211 (IHQS…PNST), 233 to 276 (PLTA…GDIN), 279 to 339 (GHEA…PIVV), and 343 to 384 (LAAK…YATA). 3 disordered regions span residues 427-488 (GRMG…PDPY), 590-618 (SQNG…TGQQ), and 652-672 (AIDP…SSKS). Composition is skewed to polar residues over residues 467 to 477 (QKSQPNGTATP) and 590 to 602 (SQNG…TNTP).

Belongs to the WD repeat HIR1 family.

Its subcellular location is the nucleus. Functionally, required for replication-independent chromatin assembly and for the periodic repression of histone gene transcription during the cell cycle. The sequence is that of Protein HIR1 (HIR1) from Aspergillus oryzae (strain ATCC 42149 / RIB 40) (Yellow koji mold).